A 159-amino-acid chain; its full sequence is NADH-quinone oxidoreductase subunit I (159 aa).

4Fe-4S ferredoxin-type domains follow at residues 51–80 (RRYE…IEAD) and 90–119 (TRYD…EGPN). [4Fe-4S] cluster contacts are provided by Cys60, Cys63, Cys66, Cys70, Cys99, Cys102, Cys105, and Cys109.

This sequence belongs to the complex I 23 kDa subunit family. As to quaternary structure, NDH-1 is composed of 14 different subunits. Subunits NuoA, H, J, K, L, M, N constitute the membrane sector of the complex. [4Fe-4S] cluster is required as a cofactor.

It is found in the cell inner membrane. The enzyme catalyses a quinone + NADH + 5 H(+)(in) = a quinol + NAD(+) + 4 H(+)(out). Functionally, NDH-1 shuttles electrons from NADH, via FMN and iron-sulfur (Fe-S) centers, to quinones in the respiratory chain. The immediate electron acceptor for the enzyme in this species is believed to be ubiquinone. Couples the redox reaction to proton translocation (for every two electrons transferred, four hydrogen ions are translocated across the cytoplasmic membrane), and thus conserves the redox energy in a proton gradient. This chain is NADH-quinone oxidoreductase subunit I, found in Rickettsia akari (strain Hartford).